The chain runs to 195 residues: Dephospho-CoA kinase (195 aa).

The DPCK domain occupies 3–195; it reads IVGLTGGIGS…IALHENYLNH (193 aa). An ATP-binding site is contributed by 11-16; it reads GSGKSA.

Belongs to the CoaE family.

Its subcellular location is the cytoplasm. The enzyme catalyses 3'-dephospho-CoA + ATP = ADP + CoA + H(+). It participates in cofactor biosynthesis; coenzyme A biosynthesis; CoA from (R)-pantothenate: step 5/5. Functionally, catalyzes the phosphorylation of the 3'-hydroxyl group of dephosphocoenzyme A to form coenzyme A. The chain is Dephospho-CoA kinase from Acinetobacter baylyi (strain ATCC 33305 / BD413 / ADP1).